We begin with the raw amino-acid sequence, 591 residues long: Isocitrate dehydrogenase kinase/phosphatase (591 aa).

ATP is bound by residues 315-321 and lysine 336; that span reads APGVKGM. Aspartate 371 is an active-site residue.

This sequence belongs to the AceK family.

The protein localises to the cytoplasm. It carries out the reaction L-seryl-[isocitrate dehydrogenase] + ATP = O-phospho-L-seryl-[isocitrate dehydrogenase] + ADP + H(+). In terms of biological role, bifunctional enzyme which can phosphorylate or dephosphorylate isocitrate dehydrogenase (IDH) on a specific serine residue. This is a regulatory mechanism which enables bacteria to bypass the Krebs cycle via the glyoxylate shunt in response to the source of carbon. When bacteria are grown on glucose, IDH is fully active and unphosphorylated, but when grown on acetate or ethanol, the activity of IDH declines drastically concomitant with its phosphorylation. The protein is Isocitrate dehydrogenase kinase/phosphatase of Pectobacterium carotovorum subsp. carotovorum (strain PC1).